We begin with the raw amino-acid sequence, 114 residues long: Flagellar hook-basal body complex protein FliE (114 aa).

The protein belongs to the FliE family.

The protein resides in the bacterial flagellum basal body. The protein is Flagellar hook-basal body complex protein FliE of Burkholderia multivorans (strain ATCC 17616 / 249).